A 301-amino-acid chain; its full sequence is Ribonuclease Z (301 aa).

Residues His-63, His-65, Asp-67, His-68, His-141, Asp-204, and His-262 each contribute to the Zn(2+) site. The Proton acceptor role is filled by Asp-67.

The protein belongs to the RNase Z family. In terms of assembly, homodimer. Zn(2+) serves as cofactor.

It catalyses the reaction Endonucleolytic cleavage of RNA, removing extra 3' nucleotides from tRNA precursor, generating 3' termini of tRNAs. A 3'-hydroxy group is left at the tRNA terminus and a 5'-phosphoryl group is left at the trailer molecule.. Functionally, zinc phosphodiesterase, which displays some tRNA 3'-processing endonuclease activity. Probably involved in tRNA maturation, by removing a 3'-trailer from precursor tRNA. This Streptomyces coelicolor (strain ATCC BAA-471 / A3(2) / M145) protein is Ribonuclease Z.